Consider the following 394-residue polypeptide: Elongation factor Tu (394 aa).

Residues 10 to 204 (KPHVNVGTIG…ALDSYIPEPE (195 aa)) form the tr-type G domain. Positions 19–26 (GHVDHGKT) are G1. A GTP-binding site is contributed by 19–26 (GHVDHGKT). Thr-26 contacts Mg(2+). A G2 region spans residues 60–64 (GITIS). The tract at residues 81–84 (DCPG) is G3. GTP is bound by residues 81 to 85 (DCPGH) and 136 to 139 (NKCD). Positions 136 to 139 (NKCD) are G4. Residues 174–176 (SAL) form a G5 region.

Belongs to the TRAFAC class translation factor GTPase superfamily. Classic translation factor GTPase family. EF-Tu/EF-1A subfamily. In terms of assembly, monomer.

It localises to the cytoplasm. It catalyses the reaction GTP + H2O = GDP + phosphate + H(+). Its function is as follows. GTP hydrolase that promotes the GTP-dependent binding of aminoacyl-tRNA to the A-site of ribosomes during protein biosynthesis. The chain is Elongation factor Tu from Pseudoalteromonas atlantica (strain T6c / ATCC BAA-1087).